The following is a 239-amino-acid chain: Sugar fermentation stimulation protein homolog (239 aa).

It belongs to the SfsA family.

This is Sugar fermentation stimulation protein homolog from Rhizobium meliloti (strain 1021) (Ensifer meliloti).